A 580-amino-acid chain; its full sequence is Efflux pump dotC (580 aa).

The span at methionine 1–glutamate 34 shows a compositional bias: basic and acidic residues. The disordered stretch occupies residues methionine 1 to leucine 45. An N-linked (GlcNAc...) asparagine glycan is attached at asparagine 10. Positions glutamate 35–alanine 44 are enriched in acidic residues. A helical membrane pass occupies residues proline 49–leucine 69. A glycan (N-linked (GlcNAc...) asparagine) is linked at asparagine 86. The next 13 membrane-spanning stretches (helical) occupy residues alanine 89–tryptophan 109, alanine 127–threonine 147, glycine 153–leucine 173, glycine 181–phenylalanine 201, tryptophan 209–leucine 229, phenylalanine 242–phenylalanine 262, serine 275–valine 295, alanine 318–leucine 338, proline 348–alanine 368, leucine 380–phenylalanine 400, leucine 409–valine 429, threonine 444–tyrosine 466, and serine 519–valine 539. Residues lysine 559 to serine 580 are disordered.

It belongs to the major facilitator superfamily. TCR/Tet family.

It is found in the cell membrane. It localises to the vacuole membrane. Its function is as follows. Efflux pump; part of the gene cluster that mediates the biosynthesis of dothistromin (DOTH), a polyketide toxin very similar in structure to the aflatoxin precursor, versicolorin B. One function of dotC may be to transport early-stage dothistromin biosynthetic intermediates from the cytoplasm into vacuoles, thereby affecting the rate of dothistromin production. This Dothistroma septosporum (strain NZE10 / CBS 128990) (Red band needle blight fungus) protein is Efflux pump dotC.